Here is a 90-residue protein sequence, read N- to C-terminus: Bombyxin B-3 (90 aa).

The first 20 residues, 1-20, serve as a signal peptide directing secretion; that stretch reads MMKTTIMFMLVVVISLTYSS. 3 disulfide bridges follow: Cys-30-Cys-76, Cys-42-Cys-89, and Cys-75-Cys-80. Residues 49 to 67 constitute a propeptide, c peptide like; it reads SGAQYAPYFWTRQYLGSRG.

The protein belongs to the insulin family. As to quaternary structure, heterodimer of a B chain and an A chain linked by two disulfide bonds.

The protein localises to the secreted. In terms of biological role, brain peptide responsible for activation of prothoracic glands to produce ecdysone in insects. This Bombyx mori (Silk moth) protein is Bombyxin B-3 (BBXB3).